A 562-amino-acid polypeptide reads, in one-letter code: Arginine--tRNA ligase (562 aa).

A 'HIGH' region motif is present at residues 126-136 (ANPTGPLNVGH).

This sequence belongs to the class-I aminoacyl-tRNA synthetase family. In terms of assembly, monomer.

It is found in the cytoplasm. It carries out the reaction tRNA(Arg) + L-arginine + ATP = L-arginyl-tRNA(Arg) + AMP + diphosphate. This chain is Arginine--tRNA ligase, found in Salinibacter ruber (strain DSM 13855 / M31).